Here is a 180-residue protein sequence, read N- to C-terminus: Probable cobalt-precorrin-6B C(15)-methyltransferase (decarboxylating) (180 aa).

Residues Thr16, Gly40 to Gly44, Asp61, and Ala89 each bind S-adenosyl-L-methionine.

Belongs to the methyltransferase superfamily. Archaeal-type CbiT family.

The catalysed reaction is Co-precorrin-6B + S-adenosyl-L-methionine = Co-precorrin-7 + S-adenosyl-L-homocysteine + CO2. It participates in cofactor biosynthesis; adenosylcobalamin biosynthesis; cob(II)yrinate a,c-diamide from sirohydrochlorin (anaerobic route): step 8/10. Its function is as follows. Catalyzes the methylation of C-15 in cobalt-precorrin-6B followed by the decarboxylation of C-12 to form cobalt-precorrin-7. The protein is Probable cobalt-precorrin-6B C(15)-methyltransferase (decarboxylating) of Methanococcus vannielii (strain ATCC 35089 / DSM 1224 / JCM 13029 / OCM 148 / SB).